The following is a 658-amino-acid chain: UvrABC system protein B (658 aa).

In terms of domain architecture, Helicase ATP-binding spans 26 to 413; the sequence is EGINSGKKKQ…SPEVIEQIIR (388 aa). Residue 39–46 coordinates ATP; sequence GATGTGKT. Positions 92–115 match the Beta-hairpin motif; sequence YYDYYQPEAYVPQTDTFIEKDAQI. The Helicase C-terminal domain occupies 430-596; sequence QIDDLLGEIQ…TIQKGVRDVI (167 aa). The region spanning 622–657 is the UVR domain; it reads EKTIAKMEAEMKEAAKALDFERAAELRDLLLELKAE.

Belongs to the UvrB family. Forms a heterotetramer with UvrA during the search for lesions. Interacts with UvrC in an incision complex.

Its subcellular location is the cytoplasm. In terms of biological role, the UvrABC repair system catalyzes the recognition and processing of DNA lesions. A damage recognition complex composed of 2 UvrA and 2 UvrB subunits scans DNA for abnormalities. Upon binding of the UvrA(2)B(2) complex to a putative damaged site, the DNA wraps around one UvrB monomer. DNA wrap is dependent on ATP binding by UvrB and probably causes local melting of the DNA helix, facilitating insertion of UvrB beta-hairpin between the DNA strands. Then UvrB probes one DNA strand for the presence of a lesion. If a lesion is found the UvrA subunits dissociate and the UvrB-DNA preincision complex is formed. This complex is subsequently bound by UvrC and the second UvrB is released. If no lesion is found, the DNA wraps around the other UvrB subunit that will check the other stand for damage. The sequence is that of UvrABC system protein B from Bacillus anthracis.